The following is a 493-amino-acid chain: Cytochrome P450 2E1 (493 aa).

298-303 lines the substrate pocket; it reads FAGTET. Residue C437 participates in heme binding.

This sequence belongs to the cytochrome P450 family. As to quaternary structure, interacts with chaperones HSP70 and HSP90; this interaction is required for initial targeting to mitochondria. It depends on heme as a cofactor.

The protein localises to the endoplasmic reticulum membrane. It localises to the microsome membrane. It is found in the mitochondrion inner membrane. The enzyme catalyses an organic molecule + reduced [NADPH--hemoprotein reductase] + O2 = an alcohol + oxidized [NADPH--hemoprotein reductase] + H2O + H(+). It carries out the reaction (5Z,8Z,11Z)-eicosatrienoate + reduced [NADPH--hemoprotein reductase] + O2 = 19-hydroxy-(5Z,8Z,11Z)-eicosatrienoate + oxidized [NADPH--hemoprotein reductase] + H2O + H(+). The catalysed reaction is (5Z,8Z,11Z,14Z,17Z)-eicosapentaenoate + reduced [NADPH--hemoprotein reductase] + O2 = 19-hydroxy-(5Z,8Z,11Z,14Z,17Z)-eicosapentaenoate + oxidized [NADPH--hemoprotein reductase] + H2O + H(+). It catalyses the reaction (4Z,7Z,10Z,13Z,16Z,19Z)-docosahexaenoate + reduced [NADPH--hemoprotein reductase] + O2 = 21-hydroxy-(4Z,7Z,10Z,13Z,16Z,19Z)-docosahexaenoate + oxidized [NADPH--hemoprotein reductase] + H2O + H(+). The enzyme catalyses dodecanoate + reduced [NADPH--hemoprotein reductase] + O2 = 11-hydroxydodecanoate + oxidized [NADPH--hemoprotein reductase] + H2O + H(+). It carries out the reaction tetradecanoate + reduced [NADPH--hemoprotein reductase] + O2 = 13-hydroxytetradecanoate + oxidized [NADPH--hemoprotein reductase] + H2O + H(+). The catalysed reaction is 4-nitrophenol + NADPH + O2 + H(+) = 4-nitrocatechol + NADP(+) + H2O. The protein operates within lipid metabolism; fatty acid metabolism. The omega-1 hydroxylase activity is stimulated by cytochrome b5. Functionally, a cytochrome P450 monooxygenase involved in the metabolism of fatty acids. Mechanistically, uses molecular oxygen inserting one oxygen atom into a substrate, and reducing the second into a water molecule, with two electrons provided by NADPH via cytochrome P450 reductase (NADPH--hemoprotein reductase). Catalyzes the hydroxylation of carbon-hydrogen bonds. Hydroxylates fatty acids specifically at the omega-1 position displaying the highest catalytic activity for saturated fatty acids. May be involved in the oxidative metabolism of xenobiotics. The polypeptide is Cytochrome P450 2E1 (CYP2E1) (Mesocricetus auratus (Golden hamster)).